We begin with the raw amino-acid sequence, 101 residues long: MTVRILAVCGNGQGSSMIMKMKVDQFLTQSNIDHTVNSCAVGEYKSELSGADIIIASTHIAGEITVTGNKYVVGVRNMLSPADFGPKLLEVIKAHFPQDVK.

One can recognise a PTS EIIB type-2 domain in the interval 3-96 (VRILAVCGNG…KLLEVIKAHF (94 aa)). Residue Cys9 is the Phosphocysteine intermediate of the active site. Residue Cys9 is modified to Phosphocysteine.

Its subcellular location is the cytoplasm. The enzyme catalyses N(pros)-phospho-L-histidyl-[protein] + L-ascorbate(out) = L-ascorbate 6-phosphate(in) + L-histidyl-[protein]. Functionally, the phosphoenolpyruvate-dependent sugar phosphotransferase system (sugar PTS), a major carbohydrate active transport system, catalyzes the phosphorylation of incoming sugar substrates concomitantly with their translocation across the cell membrane. The enzyme II UlaABC PTS system is involved in ascorbate transport. This is Ascorbate-specific PTS system EIIB component (ulaB) from Escherichia coli O6:H1 (strain CFT073 / ATCC 700928 / UPEC).